The primary structure comprises 1942 residues: Myosin-2 (1942 aa).

The Myosin N-terminal SH3-like domain occupies 33–82; that stretch reads DAKTSVFVAEPKESFVKGTIQSKDAGKVTVKTEAGATLTVKEDQIFPMNP. Threonine 64 and threonine 69 each carry phosphothreonine. Positions 86–785 constitute a Myosin motor domain; it reads DKIEDMAMMT…LLGLLEEMRD (700 aa). An ATP-binding site is contributed by 179–186; that stretch reads GESGAGKT. Tyrosine 389 carries the post-translational modification Phosphotyrosine. Threonine 419 is modified (phosphothreonine). Residue serine 625 is modified to Phosphoserine. An actin-binding region spans residues 662-684; that stretch reads LNKLMTNLRSTHPHFVRCIIPNE. Histidine 760 is subject to Pros-methylhistidine. Positions 788-817 constitute an IQ domain; it reads LAQLITRTQAMCRGFLARVEYQKMVERRES. A coiled-coil region spans residues 849-1930; sequence SAETEKEMAT…ESQVNKLRVK (1082 aa). Phosphoserine is present on residues serine 1095 and serine 1099. The disordered stretch occupies residues 1130–1175; the sequence is EAERASRAKAEKQRSDLSRELEEISERLEEAGGATSAQIEMNKKRE. Residues 1131–1159 are compositionally biased toward basic and acidic residues; sequence AERASRAKAEKQRSDLSRELEEISERLEE. Residues serine 1165 and serine 1240 each carry the phosphoserine modification. At threonine 1244 the chain carries Phosphothreonine. Serine 1246 carries the phosphoserine modification. Threonine 1258 is modified (phosphothreonine). Serine 1264 is modified (phosphoserine). At threonine 1289 the chain carries Phosphothreonine. A phosphoserine mark is found at serine 1291, serine 1295, serine 1306, and serine 1309. Tyrosine 1467 carries the post-translational modification Phosphotyrosine. Residue threonine 1470 is modified to Phosphothreonine. The residue at position 1477 (serine 1477) is a Phosphoserine. Tyrosine 1495 is subject to Phosphotyrosine. Phosphoserine is present on serine 1498. At threonine 1504 the chain carries Phosphothreonine. Serine 1517 is subject to Phosphoserine. Threonine 1520 is subject to Phosphothreonine. A phosphoserine mark is found at serine 1557, serine 1577, serine 1603, serine 1606, serine 1717, and serine 1729. Phosphothreonine occurs at positions 1733 and 1739. Serine 1742 carries the post-translational modification Phosphoserine.

This sequence belongs to the TRAFAC class myosin-kinesin ATPase superfamily. Myosin family. As to quaternary structure, muscle myosin is a hexameric protein that consists of 2 heavy chain subunits (MHC), 2 alkali light chain subunits (MLC) and 2 regulatory light chain subunits (MLC-2). Interacts with GCSAM. In terms of tissue distribution, expressed in type 2a myofibers in the tibialis anterior and soleus muscles (at protein level).

The protein resides in the cytoplasm. Its subcellular location is the myofibril. In terms of biological role, myosins are actin-based motor molecules with ATPase activity essential for muscle contraction. This Mus musculus (Mouse) protein is Myosin-2.